The chain runs to 151 residues: uncharacterized protein (151 aa).

This is an uncharacterized protein from Acanthamoeba polyphaga mimivirus (APMV).